A 551-amino-acid chain; its full sequence is Adenine deaminase (551 aa).

Belongs to the metallo-dependent hydrolases superfamily. Adenine deaminase family. The cofactor is Mn(2+).

The enzyme catalyses adenine + H2O + H(+) = hypoxanthine + NH4(+). In Methanosarcina barkeri (strain Fusaro / DSM 804), this protein is Adenine deaminase.